The chain runs to 695 residues: Elongation factor G (695 aa).

Residues S5–T280 enclose the tr-type G domain. GTP is bound by residues A14–T21, D78–H82, and N132–D135. The segment at P279–V299 is disordered.

The protein belongs to the TRAFAC class translation factor GTPase superfamily. Classic translation factor GTPase family. EF-G/EF-2 subfamily.

It is found in the cytoplasm. Its function is as follows. Catalyzes the GTP-dependent ribosomal translocation step during translation elongation. During this step, the ribosome changes from the pre-translocational (PRE) to the post-translocational (POST) state as the newly formed A-site-bound peptidyl-tRNA and P-site-bound deacylated tRNA move to the P and E sites, respectively. Catalyzes the coordinated movement of the two tRNA molecules, the mRNA and conformational changes in the ribosome. The polypeptide is Elongation factor G (Alteromonas mediterranea (strain DSM 17117 / CIP 110805 / LMG 28347 / Deep ecotype)).